The primary structure comprises 251 residues: Pyrroloquinoline-quinone synthase (251 aa).

It belongs to the PqqC family.

The enzyme catalyses 6-(2-amino-2-carboxyethyl)-7,8-dioxo-1,2,3,4,7,8-hexahydroquinoline-2,4-dicarboxylate + 3 O2 = pyrroloquinoline quinone + 2 H2O2 + 2 H2O + H(+). It functions in the pathway cofactor biosynthesis; pyrroloquinoline quinone biosynthesis. Ring cyclization and eight-electron oxidation of 3a-(2-amino-2-carboxyethyl)-4,5-dioxo-4,5,6,7,8,9-hexahydroquinoline-7,9-dicarboxylic-acid to PQQ. This Pseudomonas putida (strain GB-1) protein is Pyrroloquinoline-quinone synthase.